Here is a 264-residue protein sequence, read N- to C-terminus: Thymidylate synthase (264 aa).

Arg21 contributes to the dUMP binding site. His51 provides a ligand contact to (6R)-5,10-methylene-5,6,7,8-tetrahydrofolate. 126–127 (RR) provides a ligand contact to dUMP. Cys146 functions as the Nucleophile in the catalytic mechanism. Residues 166 to 169 (RSCD), Asn177, and 207 to 209 (HLY) each bind dUMP. Residue Asp169 participates in (6R)-5,10-methylene-5,6,7,8-tetrahydrofolate binding. Ser263 provides a ligand contact to (6R)-5,10-methylene-5,6,7,8-tetrahydrofolate.

The protein belongs to the thymidylate synthase family. Bacterial-type ThyA subfamily. In terms of assembly, homodimer.

It localises to the cytoplasm. It catalyses the reaction dUMP + (6R)-5,10-methylene-5,6,7,8-tetrahydrofolate = 7,8-dihydrofolate + dTMP. The protein operates within pyrimidine metabolism; dTTP biosynthesis. In terms of biological role, catalyzes the reductive methylation of 2'-deoxyuridine-5'-monophosphate (dUMP) to 2'-deoxythymidine-5'-monophosphate (dTMP) while utilizing 5,10-methylenetetrahydrofolate (mTHF) as the methyl donor and reductant in the reaction, yielding dihydrofolate (DHF) as a by-product. This enzymatic reaction provides an intracellular de novo source of dTMP, an essential precursor for DNA biosynthesis. The protein is Thymidylate synthase of Buchnera aphidicola subsp. Schizaphis graminum (strain Sg).